Consider the following 310-residue polypeptide: Apolipoprotein E (310 aa).

Positions 1-18 are cleaved as a signal peptide; the sequence is MKVLWAALVVTLLAGCGA. 8 repeat units span residues 77-98, 99-120, 121-142, 143-164, 165-186, 187-208, 209-226, and 227-248. Residues 77–248 are 8 X 22 AA approximate tandem repeats; it reads ALMDDTMKEV…RLDEVREQVQ (172 aa). An LDL and other lipoprotein receptors binding region spans residues 155 to 165; the sequence is HLRKMRKRLLR. A heparin-binding site is contributed by 159–162; it reads MRKR. The tract at residues 207-283 is lipid-binding and lipoprotein association; the sequence is HTLVSKPLQE…SWFEPLVQDM (77 aa). 222-229 contributes to the heparin binding site; it reads AQRLRGRL. The interval 259-310 is homooligomerization; the sequence is NQVRLQAEAFQGRLKSWFEPLVQDMQQKWAELVEKVQLAVGAVPTSVPSEKQ. The segment at 271-283 is specificity for association with VLDL; it reads RLKSWFEPLVQDM.

Belongs to the apolipoprotein A1/A4/E family. Homotetramer. May interact with ABCA1; functionally associated with ABCA1 in the biogenesis of HDLs. May interact with APP/A4 amyloid-beta peptide; the interaction is extremely stable in vitro but its physiological significance is unclear. May interact with MAPT. May interact with MAP2. In the cerebrospinal fluid, interacts with secreted SORL1. Interacts with PMEL; this allows the loading of PMEL luminal fragment on ILVs to induce fibril nucleation. Post-translationally, APOE exists as multiple glycosylated and sialylated glycoforms within cells and in plasma. The extent of glycosylation and sialylation are tissue and context specific. Glycated in plasma VLDL. In terms of processing, phosphorylated by FAM20C in the extracellular medium.

The protein localises to the secreted. The protein resides in the extracellular space. It localises to the extracellular matrix. Its subcellular location is the extracellular vesicle. It is found in the endosome. The protein localises to the multivesicular body. Its function is as follows. APOE is an apolipoprotein, a protein associating with lipid particles, that mainly functions in lipoprotein-mediated lipid transport between organs via the plasma and interstitial fluids. APOE is a core component of plasma lipoproteins and is involved in their production, conversion and clearance. Apolipoproteins are amphipathic molecules that interact both with lipids of the lipoprotein particle core and the aqueous environment of the plasma. As such, APOE associates with chylomicrons, chylomicron remnants, very low density lipoproteins (VLDL) and intermediate density lipoproteins (IDL) but shows a preferential binding to high-density lipoproteins (HDL). It also binds a wide range of cellular receptors including the LDL receptor/LDLR and the very low-density lipoprotein receptor/VLDLR that mediate the cellular uptake of the APOE-containing lipoprotein particles. Finally, APOE also has a heparin-binding activity and binds heparan-sulfate proteoglycans on the surface of cells, a property that supports the capture and the receptor-mediated uptake of APOE-containing lipoproteins by cells. The protein is Apolipoprotein E (APOE) of Ceratotherium simum cottoni (Northern white rhinoceros).